The following is a 730-amino-acid chain: Patatin-like phospholipase domain-containing protein CIMG_04897 (730 aa).

The segment covering methionine 1 to glutamine 11 has biased composition (basic residues). Residues methionine 1–tyrosine 26 are disordered. A helical membrane pass occupies residues tryptophan 97–threonine 117. Residues leucine 281–aspartate 472 enclose the PNPLA domain. A GXSXG motif is present at residues glycine 312–glycine 316. Serine 314 acts as the Nucleophile in catalysis. The active-site Proton acceptor is aspartate 459. The disordered stretch occupies residues glycine 667 to glycine 730. A compositionally biased stretch (polar residues) spans glutamine 721 to glycine 730.

The protein belongs to the PLPL family.

The protein resides in the membrane. In terms of biological role, probable lipid hydrolase. This chain is Patatin-like phospholipase domain-containing protein CIMG_04897, found in Coccidioides immitis (strain RS) (Valley fever fungus).